A 160-amino-acid chain; its full sequence is Troponin C, isoform 2 (160 aa).

EF-hand domains are found at residues 15 to 50 (DQIE…MGQA), 51 to 86 (FEER…FVVN), 92 to 127 (GLEE…LDDN), and 128 to 160 (VSEE…MSGE). Positions 64, 66, 68, 70, and 75 each coordinate Ca(2+). Residues D141, D143, S145, T147, and E152 each coordinate Ca(2+).

This sequence belongs to the troponin C family. Pharyngeal muscle.

The chain is Troponin C, isoform 2 (tnc-2) from Caenorhabditis elegans.